Reading from the N-terminus, the 251-residue chain is Segregation and condensation protein A (251 aa).

It belongs to the ScpA family. In terms of assembly, component of a cohesin-like complex composed of ScpA, ScpB and the Smc homodimer, in which ScpA and ScpB bind to the head domain of Smc. The presence of the three proteins is required for the association of the complex with DNA.

It localises to the cytoplasm. In terms of biological role, participates in chromosomal partition during cell division. May act via the formation of a condensin-like complex containing Smc and ScpB that pull DNA away from mid-cell into both cell halves. In Bacillus licheniformis (strain ATCC 14580 / DSM 13 / JCM 2505 / CCUG 7422 / NBRC 12200 / NCIMB 9375 / NCTC 10341 / NRRL NRS-1264 / Gibson 46), this protein is Segregation and condensation protein A.